Consider the following 156-residue polypeptide: Flagellar assembly factor FliW (156 aa).

This sequence belongs to the FliW family. In terms of assembly, interacts with translational regulator CsrA and flagellin(s).

It is found in the cytoplasm. Its function is as follows. Acts as an anti-CsrA protein, binds CsrA and prevents it from repressing translation of its target genes, one of which is flagellin. Binds to flagellin and participates in the assembly of the flagellum. This is Flagellar assembly factor FliW from Pseudothermotoga lettingae (strain ATCC BAA-301 / DSM 14385 / NBRC 107922 / TMO) (Thermotoga lettingae).